A 554-amino-acid chain; its full sequence is Urocanate hydratase (554 aa).

Residues 52-53 (GG), Q130, 176-178 (GMG), E196, R201, 242-243 (NA), 263-267 (QTSAH), 273-274 (YL), and Y322 contribute to the NAD(+) site. C410 is a catalytic residue. G492 is an NAD(+) binding site.

This sequence belongs to the urocanase family. NAD(+) is required as a cofactor.

The protein localises to the cytoplasm. It catalyses the reaction 4-imidazolone-5-propanoate = trans-urocanate + H2O. The protein operates within amino-acid degradation; L-histidine degradation into L-glutamate; N-formimidoyl-L-glutamate from L-histidine: step 2/3. In terms of biological role, catalyzes the conversion of urocanate to 4-imidazolone-5-propionate. In Shewanella halifaxensis (strain HAW-EB4), this protein is Urocanate hydratase.